The sequence spans 146 residues: Ribonuclease P protein component (146 aa).

It belongs to the RnpA family. As to quaternary structure, consists of a catalytic RNA component (M1 or rnpB) and a protein subunit.

It carries out the reaction Endonucleolytic cleavage of RNA, removing 5'-extranucleotides from tRNA precursor.. In terms of biological role, RNaseP catalyzes the removal of the 5'-leader sequence from pre-tRNA to produce the mature 5'-terminus. It can also cleave other RNA substrates such as 4.5S RNA. The protein component plays an auxiliary but essential role in vivo by binding to the 5'-leader sequence and broadening the substrate specificity of the ribozyme. The sequence is that of Ribonuclease P protein component from Helicobacter hepaticus (strain ATCC 51449 / 3B1).